Consider the following 371-residue polypeptide: Bifunctional enzyme IspD/IspF (371 aa).

Positions 1 to 212 (MKDITLVLLA…FDFTPASGTI (212 aa)) are 2-C-methyl-D-erythritol 4-phosphate cytidylyltransferase. Residues 213 to 371 (FTGNGFDVHA…NLGYFDWRKF (159 aa)) form a 2-C-methyl-D-erythritol 2,4-cyclodiphosphate synthase region. Asp-219 and His-221 together coordinate a divalent metal cation. Residues 219–221 (DVH) and 245–246 (HS) contribute to the 4-CDP-2-C-methyl-D-erythritol 2-phosphate site. His-253 contributes to the a divalent metal cation binding site. Residues 267 to 269 (DIG), 272 to 276 (FPDTD), 341 to 344 (STTE), Phe-348, and Arg-351 each bind 4-CDP-2-C-methyl-D-erythritol 2-phosphate.

The protein in the N-terminal section; belongs to the IspD/TarI cytidylyltransferase family. IspD subfamily. In the C-terminal section; belongs to the IspF family. A divalent metal cation is required as a cofactor.

The enzyme catalyses 2-C-methyl-D-erythritol 4-phosphate + CTP + H(+) = 4-CDP-2-C-methyl-D-erythritol + diphosphate. It catalyses the reaction 4-CDP-2-C-methyl-D-erythritol 2-phosphate = 2-C-methyl-D-erythritol 2,4-cyclic diphosphate + CMP. It functions in the pathway isoprenoid biosynthesis; isopentenyl diphosphate biosynthesis via DXP pathway; isopentenyl diphosphate from 1-deoxy-D-xylulose 5-phosphate: step 2/6. Its pathway is isoprenoid biosynthesis; isopentenyl diphosphate biosynthesis via DXP pathway; isopentenyl diphosphate from 1-deoxy-D-xylulose 5-phosphate: step 4/6. Functionally, bifunctional enzyme that catalyzes the formation of 4-diphosphocytidyl-2-C-methyl-D-erythritol from CTP and 2-C-methyl-D-erythritol 4-phosphate (MEP) (IspD), and catalyzes the conversion of 4-diphosphocytidyl-2-C-methyl-D-erythritol 2-phosphate (CDP-ME2P) to 2-C-methyl-D-erythritol 2,4-cyclodiphosphate (ME-CPP) with a corresponding release of cytidine 5-monophosphate (CMP) (IspF). The chain is Bifunctional enzyme IspD/IspF from Campylobacter hominis (strain ATCC BAA-381 / DSM 21671 / CCUG 45161 / LMG 19568 / NCTC 13146 / CH001A).